We begin with the raw amino-acid sequence, 650 residues long: Chaperone protein HtpG (650 aa).

Residues 1–356 form an a; substrate-binding region; sequence MSTRVETLEF…THDLSLNISR (356 aa). The segment at 222-245 is disordered; it reads AKDRDSNDDGTAESGAGAENAGDR. Residues 357 to 572 form a b region; it reads EILQQDRRIQ…TFDMTPALEK (216 aa). The interval 573–650 is c; sequence MYRAMGHEMP…LLAERLAEAL (78 aa).

It belongs to the heat shock protein 90 family. Homodimer.

It localises to the cytoplasm. Its function is as follows. Molecular chaperone. Has ATPase activity. In Frankia casuarinae (strain DSM 45818 / CECT 9043 / HFP020203 / CcI3), this protein is Chaperone protein HtpG.